A 123-amino-acid polypeptide reads, in one-letter code: Large ribosomal subunit protein bL12 (123 aa).

K84 carries the post-translational modification N6-methyllysine. Residues 94 to 123 (PATLKEGMSKEDGDEAKTKLEEAGASVELK) are disordered. The span at 100 to 115 (GMSKEDGDEAKTKLEE) shows a compositional bias: basic and acidic residues.

This sequence belongs to the bacterial ribosomal protein bL12 family. Homodimer. Part of the ribosomal stalk of the 50S ribosomal subunit. Forms a multimeric L10(L12)X complex, where L10 forms an elongated spine to which 2 to 4 L12 dimers bind in a sequential fashion. Binds GTP-bound translation factors.

Functionally, seems to be the binding site for several of the factors involved in protein synthesis and appears to be essential for accurate translation. Forms part of the ribosomal stalk which helps the ribosome interact with GTP-bound translation factors. Is thus essential for accurate translation. The sequence is that of Large ribosomal subunit protein bL12 from Halophilic eubacterium NRCC 41227.